A 346-amino-acid chain; its full sequence is MERKFMSLQPSISVSEMEPNGTFSNNNSRNCTIENFKREFFPIVYLIIFFWGVLGNGLSIYVFLQPYKKSTSVNVFMLNLAISDLLFISTLPFRADYYLRGSNWIFGDLACRIMSYSLYVNMYSSIYFLTVLSVVRFLAMVHPFRLLHVTSIRSAWILCGIIWILIMASSIMLLDSGSEQNGSVTSCLELNLYKIAKLQTMNYIALVVGCLLPFFTLSICYLLIIRVLLKVEVPESGLRVSHRKALTTIIITLIIFFLCFLPYHTLRTVHLTTWKVGLCKDRLHKALVITLALAAANACFNPLLYYFAGENFKDRLKSALRKGHPQKAKTKCVFPVSVWLRKETRV.

Residues 1–42 are Extracellular-facing; the sequence is MERKFMSLQPSISVSEMEPNGTFSNNNSRNCTIENFKREFFP. N-linked (GlcNAc...) asparagine glycans are attached at residues Asn20, Asn26, and Asn30. The chain crosses the membrane as a helical span at residues 43–63; sequence IVYLIIFFWGVLGNGLSIYVF. Topologically, residues 64 to 72 are cytoplasmic; the sequence is LQPYKKSTS. The helical transmembrane segment at 73 to 93 threads the bilayer; sequence VNVFMLNLAISDLLFISTLPF. Topologically, residues 94-123 are extracellular; sequence RADYYLRGSNWIFGDLACRIMSYSLYVNMY. Cysteines 111 and 187 form a disulfide. Residues 124 to 144 form a helical membrane-spanning segment; the sequence is SSIYFLTVLSVVRFLAMVHPF. The Cytoplasmic segment spans residues 145-153; the sequence is RLLHVTSIR. The chain crosses the membrane as a helical span at residues 154–174; that stretch reads SAWILCGIIWILIMASSIMLL. The Extracellular segment spans residues 175-204; it reads DSGSEQNGSVTSCLELNLYKIAKLQTMNYI. Asn181 carries N-linked (GlcNAc...) asparagine glycosylation. A helical transmembrane segment spans residues 205 to 225; the sequence is ALVVGCLLPFFTLSICYLLII. The Cytoplasmic segment spans residues 226–245; that stretch reads RVLLKVEVPESGLRVSHRKA. The helical transmembrane segment at 246–266 threads the bilayer; sequence LTTIIITLIIFFLCFLPYHTL. Residues 267 to 286 are Extracellular-facing; it reads RTVHLTTWKVGLCKDRLHKA. Residues 287-307 traverse the membrane as a helical segment; the sequence is LVITLALAAANACFNPLLYYF. Residues 308-346 are Cytoplasmic-facing; the sequence is AGENFKDRLKSALRKGHPQKAKTKCVFPVSVWLRKETRV.

This sequence belongs to the G-protein coupled receptor 1 family. As to expression, widely expressed, with highest levels in the heart, placenta, spleen, peripheral blood leukocytes and adrenal gland. In lung, expressed in the interstitial macrophages, and slightly in smooth muscle cells.

It is found in the cell membrane. Receptor for cysteinyl leukotrienes. The response is mediated via a G-protein that activates a phosphatidylinositol-calcium second messenger system. Stimulation by BAY u9773, a partial agonist, induces specific contractions of pulmonary veins and might also have an indirect role in the relaxation of the pulmonary vascular endothelium. The rank order of affinities for the leukotrienes is LTC4 = LTD4 &gt;&gt; LTE4. The chain is Cysteinyl leukotriene receptor 2 (CYSLTR2) from Homo sapiens (Human).